Here is a 736-residue protein sequence, read N- to C-terminus: MTRQSTVDQNQSTYNAKNFITKERQESKLDIDQLNVFLENGEQEAKLTHDLIEEIINDPILKTDTDHYDITKSQEREITARRIARLSLYMEHDVKTKQREFKDDLVKNLERKDSKLLTNKDLSIFDRRLSLVANIDPGLSTRIGVHLGLFGNCIKGNGTDEQIHYWLQEKGALLLKGIYGCFAMTELGHGSNVAQLQTTATYDPSSDTFKINTPDLLATKWWIGGAAHSATHTTAYARLIVNGKDYGVKTFVVPLRDEKTLNLLPGIMIGDIGAKMGRDGIDNGWIQFKNVVIPRQFMLQRFTKVIPGSPPKVQTQPLLDQISGYSALLSGRVNMVMDSFRFGSKFAIIATRYAVGRQQFGPEGNETQLIDYPLHQYRVLPQLALCYLVAPTAHKLMGTYISTLMELHQAGADKAKLINVSNKLKDLFIDSASLKATNTWLVAKLIDDLRQTCGGHGYSSYNGFGKGYNDWVVQCTWEGDNNILSLTSAKSIVKKFADISRGKNTTVTTDSLKYLTPQFIGKSLSKDLTFKFDNKKDFTEIWAVMIIRLIHHVVELISKGTKIDSLSKTLVQISKFHAIHSMLLTYQDKLNNESEASVKDAYTKGYLWKLYELFSLYFIDQHLGEFLLLKVVTSDQMSQVLQPRLLQLLPEIRKECIALTDAFKLPDAMINAPIGYYDGDIYHNYFNEVTNNNKLEPDGAGRPPYYPLLTSMLGRDDFQNRLGGSFESETLDSLLK.

Belongs to the acyl-CoA oxidase family. FAD is required as a cofactor.

It is found in the peroxisome. It catalyses the reaction a 2,3-saturated acyl-CoA + O2 = a (2E)-enoyl-CoA + H2O2. The protein operates within lipid metabolism; peroxisomal fatty acid beta-oxidation. The protein is Acyl-coenzyme A oxidase (POX1) of Kluyveromyces lactis (strain ATCC 8585 / CBS 2359 / DSM 70799 / NBRC 1267 / NRRL Y-1140 / WM37) (Yeast).